Here is a 317-residue protein sequence, read N- to C-terminus: Ferrochelatase (317 aa).

Fe cation-binding residues include H192 and E271.

The protein belongs to the ferrochelatase family.

It localises to the cytoplasm. The catalysed reaction is heme b + 2 H(+) = protoporphyrin IX + Fe(2+). It participates in porphyrin-containing compound metabolism; protoheme biosynthesis; protoheme from protoporphyrin-IX: step 1/1. Its function is as follows. Catalyzes the ferrous insertion into protoporphyrin IX. The chain is Ferrochelatase from Geobacter metallireducens (strain ATCC 53774 / DSM 7210 / GS-15).